Consider the following 442-residue polypeptide: UDP-N-acetylmuramoylalanine--D-glutamate ligase (442 aa).

113-119 (GSNGKTT) is an ATP binding site.

The protein belongs to the MurCDEF family.

The protein resides in the cytoplasm. It catalyses the reaction UDP-N-acetyl-alpha-D-muramoyl-L-alanine + D-glutamate + ATP = UDP-N-acetyl-alpha-D-muramoyl-L-alanyl-D-glutamate + ADP + phosphate + H(+). It functions in the pathway cell wall biogenesis; peptidoglycan biosynthesis. In terms of biological role, cell wall formation. Catalyzes the addition of glutamate to the nucleotide precursor UDP-N-acetylmuramoyl-L-alanine (UMA). This chain is UDP-N-acetylmuramoylalanine--D-glutamate ligase, found in Coxiella burnetii (strain Dugway 5J108-111).